A 445-amino-acid polypeptide reads, in one-letter code: Proton extrusion protein PxcA (445 aa).

4 helical membrane passes run 227–247 (FILLLIIVPLLTQQLTKTFLI), 322–342 (AIANIFADICSLIAFGFVVAF), 369–389 (LIILFTDIFVGFHSPHGWEVI), and 405–425 (FNFLFIATFPVILDTVLKYWI).

This sequence belongs to the CemA family.

Its subcellular location is the cell inner membrane. Its function is as follows. Required for H(+) efflux immediately after light irradiation to form a rapid H(+) concentration gradient across the thylakoid membranes. Together with PxcL, contributes to transient H(+) uptake following dark to light transition. The polypeptide is Proton extrusion protein PxcA (Microcystis aeruginosa (strain NIES-843 / IAM M-2473)).